Consider the following 911-residue polypeptide: MLTPFKLFTKIFKNRNDRVLLRMKKVVDMINYMEKDIQKLNDSQLASKTNEFRKSIESGVKNLENLLPQAFAVVRESIKRIFNIRLFDVQLLGGIVLNSRCIAEMKTGEGKTLTATLPAYLNALSGQGVHIVTVNNYLAHRDAINNKPLFEFLGLTVGINLPGLSASMKRAAYTADITYGTNNEYGFDYLRDNMVFVPEERVQRGLHYALIDEVDSILIDEARTPLVISGPSDDTSLLYSKINELVFSIIQKNKRNIDNLQKEEYFTVDEKSRQVILTENGLVLIEQLLIKSGIMNQGESLYSSDNIILMHHVNAAFRAHILFTCEVDYLVKNGEILIIDEHTGRVMPGRRWSDGLHQAIEAKEHVTIQNENQTLASITFQNYFRLYEKLSGMTGTANTEAFEFQSIYKLDTIVIPTNRPMIRNDFPDIIYMTEHEKIEAIINDIKDCVKRNQPVLVGTISIEKSEIISHALSQIGIMHKVLNAKFHAAEADIIAQAGYPGAVTIATNMAGRGTDIILGGNWRAEITALHKANTCKILKIKSDWKKRHHAVLKSGGLHVIGTERHESRRIDNQLRGRSGRQGDIGSSRFYLSMEDSLIRIFASNRLVNMMKKLGMKSGESIEHPWITKAIAHAQKKVENRNFDIRKQLLEYDDVANDQRRVIYEQRDKLLNISDISDIIRNIRCDVVEKLFNIYIPLEIIENKRDVMKLEECLEKDFCLELPLLKWIEVEPRLYEEKEILRQRILENMTQKYEHTRKIIGIDIMCSFEKEIMLRTFDVLWKEHLASMDYLRQGIHLRGYAQKDPKQEYKRESFSMFTKMLDHLKYEVISEVSKLVIELFNKKESILNSTNKYNDFQSINTQVMNTKLLSIDHFLNQHTLTKNKTVSRNDACPCGSNKKFKECHGKIVNKRH.

ATP is bound by residues Q90, 108–112, and D515; that span reads GEGKT. 4 residues coordinate Zn(2+): C891, C893, C902, and H903.

It belongs to the SecA family. In terms of assembly, monomer and homodimer. Part of the essential Sec protein translocation apparatus which comprises SecA, SecYEG and auxiliary proteins SecDF-YajC and YidC. Zn(2+) serves as cofactor.

Its subcellular location is the cell inner membrane. The protein resides in the cytoplasm. It carries out the reaction ATP + H2O + cellular proteinSide 1 = ADP + phosphate + cellular proteinSide 2.. Part of the Sec protein translocase complex. Interacts with the SecYEG preprotein conducting channel. Has a central role in coupling the hydrolysis of ATP to the transfer of proteins into and across the cell membrane, serving both as a receptor for the preprotein-SecB complex and as an ATP-driven molecular motor driving the stepwise translocation of polypeptide chains across the membrane. This chain is Protein translocase subunit SecA, found in Blochmanniella pennsylvanica (strain BPEN).